The following is an 88-amino-acid chain: Small ribosomal subunit protein bS20 (88 aa).

It belongs to the bacterial ribosomal protein bS20 family.

Binds directly to 16S ribosomal RNA. The polypeptide is Small ribosomal subunit protein bS20 (Rhodospirillum rubrum (strain ATCC 11170 / ATH 1.1.1 / DSM 467 / LMG 4362 / NCIMB 8255 / S1)).